The sequence spans 758 residues: EMILIN-3 (758 aa).

The first 21 residues, Met1–Ala21, serve as a signal peptide directing secretion. The 77-residue stretch at His54–Glu130 folds into the EMI domain. Cystine bridges form between Cys58-Cys120, Cys85-Cys91, and Cys119-Cys128. A glycan (N-linked (GlcNAc...) asparagine) is linked at Asn65. The disordered stretch occupies residues His131–Phe178. Positions Ser379–Thr401 form a coiled coil. An N-linked (GlcNAc...) asparagine glycan is attached at Asn436. Coiled-coil stretches lie at residues Gly460–Pro483 and Ala528–Glu567. N-linked (GlcNAc...) asparagine glycans are attached at residues Asn555 and Asn609. 2 coiled-coil regions span residues Arg642–His677 and His720–Arg753. N-linked (GlcNAc...) asparagine glycosylation occurs at Asn725.

It localises to the secreted. The protein resides in the extracellular space. Its subcellular location is the extracellular matrix. The protein localises to the cytoplasm. The chain is EMILIN-3 (Emilin3) from Mus musculus (Mouse).